We begin with the raw amino-acid sequence, 352 residues long: Transcription factor BHLH156 (352 aa).

Positions 59 to 141 (GGDDDDNGGV…RSKTIVSERK (83 aa)) are disordered. Residues 130-143 (RDRSKTIVSERKRR) are basic motif. The bHLH domain maps to 130–179 (RDRSKTIVSERKRRVRMKEKLYELRALVPNITKMDKASIIADAVVYVKDL). Residues 144 to 179 (VRMKEKLYELRALVPNITKMDKASIIADAVVYVKDL) form a helix-loop-helix motif region. The tract at residues 194-216 (EEARPIRPPPPSAAAQRPQRQPR) is disordered. Low complexity predominate over residues 206-216 (AAAQRPQRQPR).

It belongs to the bHLH protein family. Forms homodimers. Interacts with IRO2 in the nucleus. In terms of tissue distribution, expressed in the meristematic zone of lateral and primary roots.

It localises to the nucleus. Functionally, transcription factor involved in positive regulation of genes involved in strategy II iron acquisition, including genes for mugineic acid (MA) family phytosiderophores biosynthesis, and genes involved in S-adenosylmethionine cycle and iron transport. May play a role in the regulation of iron deficiency response by promoting the nuclear localization of IRO2. Possesses transactivation activity in yeast. This chain is Transcription factor BHLH156, found in Oryza sativa subsp. japonica (Rice).